Consider the following 445-residue polypeptide: Proline--tRNA ligase (445 aa).

It belongs to the class-II aminoacyl-tRNA synthetase family. ProS type 2 subfamily. In terms of assembly, homodimer.

The protein localises to the cytoplasm. It catalyses the reaction tRNA(Pro) + L-proline + ATP = L-prolyl-tRNA(Pro) + AMP + diphosphate. Its function is as follows. Catalyzes the attachment of proline to tRNA(Pro) in a two-step reaction: proline is first activated by ATP to form Pro-AMP and then transferred to the acceptor end of tRNA(Pro). The protein is Proline--tRNA ligase of Cereibacter sphaeroides (strain ATCC 17025 / ATH 2.4.3) (Rhodobacter sphaeroides).